The primary structure comprises 152 residues: UPF0178 protein YPTS_2857 (152 aa).

This sequence belongs to the UPF0178 family.

The protein is UPF0178 protein YPTS_2857 of Yersinia pseudotuberculosis serotype IB (strain PB1/+).